We begin with the raw amino-acid sequence, 111 residues long: Flagellar hook-basal body complex protein FliE (111 aa).

This sequence belongs to the FliE family.

The protein resides in the bacterial flagellum basal body. The polypeptide is Flagellar hook-basal body complex protein FliE (Clostridium acetobutylicum (strain ATCC 824 / DSM 792 / JCM 1419 / IAM 19013 / LMG 5710 / NBRC 13948 / NRRL B-527 / VKM B-1787 / 2291 / W)).